We begin with the raw amino-acid sequence, 255 residues long: MVIGVFPAAKLGILAIKQVSKPIANVIKSNAKSSPFFRKYICMPPAQFYNWVEVKTKMWALNMGGRVNVPPLNEAMAIELGANLLGEFIIFSIGAGLLIFEYSRQTIKENKKNELAQSEKMELTNMLTEMNFRLERQDAQIREMTRVLADLDSRNIFRWHKEPIQEYVPFDPDTPDQSASARNPKKFDSLYDPQGGMAFRALHFLDTQIFVDGRNRKAKEALQHLDEVAVQLEQSLGEAATVAVASSLPTKAADL.

Positions 108-154 form a coiled coil; the sequence is KENKKNELAQSEKMELTNMLTEMNFRLERQDAQIREMTRVLADLDSR. The disordered stretch occupies residues 168-187; sequence VPFDPDTPDQSASARNPKKF. Residues 212–241 adopt a coiled-coil conformation; it reads DGRNRKAKEALQHLDEVAVQLEQSLGEAAT.

Belongs to the OPA3 family.

This is Putative OPA3-like protein CG13603 from Drosophila melanogaster (Fruit fly).